Reading from the N-terminus, the 260-residue chain is uncharacterized protein (260 aa).

The Radical SAM core domain occupies 6 to 239 (AGVRSGVVVS…VAVAETYLPN (234 aa)).

This is an uncharacterized protein from Sinorhizobium fredii (strain NBRC 101917 / NGR234).